The sequence spans 281 residues: Microtubule-associated protein RP/EB family member 3 (281 aa).

Residues 14 to 116 enclose the Calponin-homology (CH) domain; it reads NLSRHDMLAW…FIQWFKKFFD (103 aa). The tract at residues 157–181 is disordered; it reads VPQRTSPTGPKNMQTSGRLSNVAPP. Positions 158–175 are enriched in polar residues; sequence PQRTSPTGPKNMQTSGRL. Residues Ser162 and Ser176 each carry the phosphoserine modification. An EB1 C-terminal domain is found at 194 to 264; sequence GGHETDAQIL…LYATEEGFAP (71 aa). The segment at 217–260 is APC-binding; that stretch reads DGLEKERDFYFSKLRDIELICQEHESENSPVISGIIGILYATEE. The tract at residues 217–281 is DCTN1-binding; that stretch reads DGLEKERDFY…EHQQEDQDEY (65 aa). Positions 261–281 are disordered; the sequence is GFAPPEDDEIEEHQQEDQDEY. The segment covering 272-281 has biased composition (basic and acidic residues); the sequence is EHQQEDQDEY.

This sequence belongs to the MAPRE family. Homodimer. Heterodimer with MAPRE1. Binds monomeric and polymerized GTP-bound tubulin. Interacts with APC2. Interacts with DCTN1 and SRCIN1. Binds to the C-terminal domain of APC. Interacts (via C-terminus) with CLIP1. Interacts with SLAIN2 and SLAIN1. Interacts with AKAP9. Interacts with PDE4DIP. Interacts with PDE4DIP isoform 13/MMG8/SMYLE; this interaction is required for its recruitment to the Golgi apparatus. As to expression, predominantly expressed in brain and muscle.

The protein resides in the cytoplasm. It localises to the cytoskeleton. In terms of biological role, plus-end tracking protein (+TIP) that binds to the plus-end of microtubules and regulates the dynamics of the microtubule cytoskeleton. Promotes microtubule growth. May be involved in spindle function by stabilizing microtubules and anchoring them at centrosomes. Also acts as a regulator of minus-end microtubule organization: interacts with the complex formed by AKAP9 and PDE4DIP, leading to recruit CAMSAP2 to the Golgi apparatus, thereby tethering non-centrosomal minus-end microtubules to the Golgi, an important step for polarized cell movement. Promotes elongation of CAMSAP2-decorated microtubule stretches on the minus-end of microtubules. This Homo sapiens (Human) protein is Microtubule-associated protein RP/EB family member 3 (MAPRE3).